The primary structure comprises 363 residues: GTP-binding protein 1 (363 aa).

In terms of domain architecture, OBG-type G spans Ala63–Asn287. GTP is bound by residues Gly69–Ser76, Asp115–Ile119, and Lys246–Ala249. Positions Asn287–Thr362 constitute a TGS domain.

The protein belongs to the TRAFAC class OBG-HflX-like GTPase superfamily. OBG GTPase family.

This Schizosaccharomyces pombe (strain 972 / ATCC 24843) (Fission yeast) protein is GTP-binding protein 1 (gtp1).